We begin with the raw amino-acid sequence, 68 residues long: MPLPKIEDARKLNDQELADEIVAVKKQLFDLRLQQGTGRLEKTHEIKHARHRLALLMTVERQRQLQAQ.

It belongs to the universal ribosomal protein uL29 family.

This Picosynechococcus sp. (strain ATCC 27264 / PCC 7002 / PR-6) (Agmenellum quadruplicatum) protein is Large ribosomal subunit protein uL29.